The following is a 347-amino-acid chain: Ryncolin-3 (347 aa).

An N-terminal signal peptide occupies residues M1–G19. One can recognise a Collagen-like domain in the interval G57–G114. The tract at residues P62–D115 is disordered. Residues K95–D115 show a composition bias toward basic and acidic residues. In terms of domain architecture, Fibrinogen C-terminal spans D121–Q341. Cystine bridges form between C132–C160 and C284–C297.

Belongs to the ficolin lectin family. Veficolin subfamily. Hydroxylated. As to expression, expressed by the venom duct.

It localises to the secreted. In terms of biological role, initiates complement activation and/or interferes in platelet aggregation and/or blood coagulation. The protein is Ryncolin-3 of Cerberus rynchops (Dog-faced water snake).